Consider the following 309-residue polypeptide: MSVSGKIGEVDRWIEQLSRCEPLSEEDVIQMCDLAKEVLSVESNVQSVRCPVTVCGDIHGQFHDLMELFNIGGPSPDTNYLFMGDYVDRGYHSVETVSLLIAFKIRYPQRITILRGNHESRQITQVYGFYDECLRKYGNANVWQYFTDLFDYLPLTALIEDRIFCLHGGLSPSIDTLDHVRILDRVQEVPHEGPICDLLWSDPDDRPGWGISPRGAGYTFGPDIAEAFNHNNGLDLIARAHQLVMEGYNWTTNHNVVTIFSAPNYCYRCGNQAAIMGIDDHINYAFIQYDTAPRKEELHVTRRTPDYFL.

The Mn(2+) site is built by Asp-57, His-59, Asp-85, and Asn-117. His-118 serves as the catalytic Proton donor. 2 residues coordinate Mn(2+): His-167 and His-241. Leu-309 is modified (leucine methyl ester).

It belongs to the PPP phosphatase family. PP-2A subfamily. Mn(2+) is required as a cofactor.

It catalyses the reaction O-phospho-L-seryl-[protein] + H2O = L-seryl-[protein] + phosphate. The enzyme catalyses O-phospho-L-threonyl-[protein] + H2O = L-threonyl-[protein] + phosphate. Functionally, essential role in cell cycle control. PP2A may be involved in controlling the entry into mitosis, possibly acting as an inhibitor. In Schizosaccharomyces pombe (strain 972 / ATCC 24843) (Fission yeast), this protein is Minor serine/threonine-protein phosphatase PP2A-1 catalytic subunit (ppa1).